The sequence spans 743 residues: 1,4-alpha-glucan branching enzyme GlgB (743 aa).

The active-site Nucleophile is Asp-416. Catalysis depends on Glu-469, which acts as the Proton donor.

This sequence belongs to the glycosyl hydrolase 13 family. GlgB subfamily. In terms of assembly, monomer.

It carries out the reaction Transfers a segment of a (1-&gt;4)-alpha-D-glucan chain to a primary hydroxy group in a similar glucan chain.. Its pathway is glycan biosynthesis; glycogen biosynthesis. Functionally, catalyzes the formation of the alpha-1,6-glucosidic linkages in glycogen by scission of a 1,4-alpha-linked oligosaccharide from growing alpha-1,4-glucan chains and the subsequent attachment of the oligosaccharide to the alpha-1,6 position. The polypeptide is 1,4-alpha-glucan branching enzyme GlgB (Shewanella baltica (strain OS223)).